Consider the following 100-residue polypeptide: uncharacterized protein (100 aa).

This is an uncharacterized protein from Enterobacteria phage T4 (Bacteriophage T4).